A 249-amino-acid polypeptide reads, in one-letter code: MLMKRIIPCLDVKEGRVVKGVKFQNLRDLGDPVAVAKYYYEQGADELVLLDISATQEGRDTMLDIVERVAEVIYMPFTVGGGIKTLEDAKRLIRAGADKVSLNSSALQNPQLIQDISRLFGVQATVVAIDAKRTGDSWGVFSHGGTQAVGRDAIEWAKEAVSLGAGELLVTSMDADGTKDGYDLELIQRLREVVNVPLIASGGVGTLEHLAEGLEAGADAALAASIFHEATYTMPETKDYLKARGVNVR.

Catalysis depends on residues Asp11 and Asp130.

This sequence belongs to the HisA/HisF family. As to quaternary structure, heterodimer of HisH and HisF.

It is found in the cytoplasm. It carries out the reaction 5-[(5-phospho-1-deoxy-D-ribulos-1-ylimino)methylamino]-1-(5-phospho-beta-D-ribosyl)imidazole-4-carboxamide + L-glutamine = D-erythro-1-(imidazol-4-yl)glycerol 3-phosphate + 5-amino-1-(5-phospho-beta-D-ribosyl)imidazole-4-carboxamide + L-glutamate + H(+). The protein operates within amino-acid biosynthesis; L-histidine biosynthesis; L-histidine from 5-phospho-alpha-D-ribose 1-diphosphate: step 5/9. Its function is as follows. IGPS catalyzes the conversion of PRFAR and glutamine to IGP, AICAR and glutamate. The HisF subunit catalyzes the cyclization activity that produces IGP and AICAR from PRFAR using the ammonia provided by the HisH subunit. The chain is Imidazole glycerol phosphate synthase subunit HisF from Exiguobacterium sibiricum (strain DSM 17290 / CCUG 55495 / CIP 109462 / JCM 13490 / 255-15).